Consider the following 209-residue polypeptide: Uracil phosphoribosyltransferase (209 aa).

5-phospho-alpha-D-ribose 1-diphosphate is bound by residues arginine 79, arginine 104, and 131 to 139; that span reads DPMLATGNS. Uracil contacts are provided by residues isoleucine 194 and 199–201; that span reads GDA. Residue aspartate 200 coordinates 5-phospho-alpha-D-ribose 1-diphosphate.

The protein belongs to the UPRTase family. The cofactor is Mg(2+).

The enzyme catalyses UMP + diphosphate = 5-phospho-alpha-D-ribose 1-diphosphate + uracil. It participates in pyrimidine metabolism; UMP biosynthesis via salvage pathway; UMP from uracil: step 1/1. Its activity is regulated as follows. Allosterically activated by GTP. Catalyzes the conversion of uracil and 5-phospho-alpha-D-ribose 1-diphosphate (PRPP) to UMP and diphosphate. The polypeptide is Uracil phosphoribosyltransferase (Delftia acidovorans (strain DSM 14801 / SPH-1)).